Here is a 122-residue protein sequence, read N- to C-terminus: Phosphoribosyl-ATP pyrophosphatase (122 aa).

It belongs to the PRA-PH family.

It is found in the cytoplasm. The catalysed reaction is 1-(5-phospho-beta-D-ribosyl)-ATP + H2O = 1-(5-phospho-beta-D-ribosyl)-5'-AMP + diphosphate + H(+). Its pathway is amino-acid biosynthesis; L-histidine biosynthesis; L-histidine from 5-phospho-alpha-D-ribose 1-diphosphate: step 2/9. This chain is Phosphoribosyl-ATP pyrophosphatase, found in Cupriavidus metallidurans (strain ATCC 43123 / DSM 2839 / NBRC 102507 / CH34) (Ralstonia metallidurans).